Consider the following 582-residue polypeptide: Isopropyl malate synthase AMT7 (582 aa).

In terms of domain architecture, Pyruvate carboxyltransferase spans 61–341; it reads PVLFSTDLRD…EPGIDLSRLD (281 aa).

It belongs to the alpha-IPM synthase/homocitrate synthase family. LeuA type 2 subfamily.

It catalyses the reaction 3-methyl-2-oxobutanoate + acetyl-CoA + H2O = (2S)-2-isopropylmalate + CoA + H(+). Its pathway is mycotoxin biosynthesis. Functionally, isopropyl malate synthase; part of the gene clusters that mediate the biosynthesis of AM-toxins, host-selective toxins (HSTs) causing Alternaria blotch on apple, a worldwide distributed disease. AM-toxins are cyclic depsipeptides containing the 3 residues 2-hydroxy-isovaleric acid (2-HIV), dehydroalanine, L-alanine which are common for all 3 AM-toxins I to III. The fourth precursor is L-alpha-amino-methoxyphenyl-valeric acid (L-Amv) for AM-toxin I, L-alpha-amino-phenyl-valeric acid (L-Apv) for AM-toxin II, and L-alpha-amino-hydroxyphenyl-valeric acid (L-Ahv) for AM-toxin III. AM-toxins have two target sites for affecting susceptible apple cells; they cause invagination of the plasma membrane and electrolyte loss and chloroplast disorganization. The non-ribosomal peptide synthetase AMT1 contains 4 catalytic modules and is responsible for activation of each residue in AM-toxin. The aldo-keto reductase AMT2 catalyzes the conversion of 2-keto-isovaleric acid (2-KIV) to 2-hydroxy-isovaleric acid (2-HIV), one of the precursor residues incorporated by AMT1 during AM-toxin biosynthesis, by reduction of its ketone to an alcohol. The cytochrome P450 monooxygenase AMT3 and the thioesterase AMT4 are also important for AM-toxin production, but their exact function within the AM-toxin biosynthesis are not known yet. Up to 21 proteins (including AMT1 to AMT4) are predicted to be involved in AM-toxin biosynthesis since their expression ishighly up-regulated in AM-toxin-producing cultures. In Alternaria alternata (Alternaria rot fungus), this protein is Isopropyl malate synthase AMT7.